We begin with the raw amino-acid sequence, 339 residues long: Methylthioribose-1-phosphate isomerase (339 aa).

Residues 50 to 52 (RGA), Arg84, and Gln186 contribute to the substrate site. Asp227 acts as the Proton donor in catalysis. 237–238 (NK) is a substrate binding site.

Belongs to the eIF-2B alpha/beta/delta subunits family. MtnA subfamily.

The enzyme catalyses 5-(methylsulfanyl)-alpha-D-ribose 1-phosphate = 5-(methylsulfanyl)-D-ribulose 1-phosphate. Its pathway is amino-acid biosynthesis; L-methionine biosynthesis via salvage pathway; L-methionine from S-methyl-5-thio-alpha-D-ribose 1-phosphate: step 1/6. In terms of biological role, catalyzes the interconversion of methylthioribose-1-phosphate (MTR-1-P) into methylthioribulose-1-phosphate (MTRu-1-P). The chain is Methylthioribose-1-phosphate isomerase from Sulfurihydrogenibium sp. (strain YO3AOP1).